A 960-amino-acid chain; its full sequence is Ran GTPase-activating protein 2 (960 aa).

LRR repeat units lie at residues 69-92 (HLNL…LIAE), 132-156 (GCRL…LYNF), 162-185 (LYSL…VGKA), 227-254 (LGTL…AFRM), and 313-340 (RDCL…CFNS). The disordered stretch occupies residues 370 to 408 (NIDFGRRGDDELLSSDEEEEQGAEDASMEEDAFNTSRET). Over residues 380–401 (ELLSSDEEEEQGAEDASMEEDA) the composition is skewed to acidic residues. LRR repeat units lie at residues 475 to 498 (ASSM…VIAK), 538 to 561 (GCKI…ALKD), 568 to 595 (SFSL…LTEC), and 663 to 685 (NRNL…KALA). The interval 777–819 (PENVNVGDEDDDLGSLDGDQEEYNSKSSDSEDADLDDDDEDDD) is disordered. Composition is skewed to acidic residues over residues 783-798 (GDED…DQEE) and 806-819 (SEDA…EDDD).

The protein resides in the nucleus. Functionally, GTPase system comprising ran-1, ran-2 and ran-3 is essential in nucleocytoplasmic trafficking. Ran-2 is a GTPase activator for the nuclear RAS-related regulatory protein Ran, converting it to the putatively inactive GDP-bound state. Required for correct chromosome alignment and segregation on the metaphase plate. This Caenorhabditis elegans protein is Ran GTPase-activating protein 2 (ran-2).